A 321-amino-acid polypeptide reads, in one-letter code: MATH domain and coiled-coil domain-containing protein At3g58410 (321 aa).

The MATH domain occupies 6 to 128; it reads GKKFAWVIKN…NGELMIVAEV (123 aa). Positions 255–310 form a coiled coil; sequence KVDWLEKKLDQVRDKKEKERSCLAKLQETEETLLKLKQKCTELDALMDTEKAELSA.

The polypeptide is MATH domain and coiled-coil domain-containing protein At3g58410 (Arabidopsis thaliana (Mouse-ear cress)).